The chain runs to 498 residues: ATP synthase subunit beta, chloroplastic (498 aa).

Residue 172–179 coordinates ATP; it reads GGAGVGKT.

It belongs to the ATPase alpha/beta chains family. As to quaternary structure, F-type ATPases have 2 components, CF(1) - the catalytic core - and CF(0) - the membrane proton channel. CF(1) has five subunits: alpha(3), beta(3), gamma(1), delta(1), epsilon(1). CF(0) has four main subunits: a(1), b(1), b'(1) and c(9-12).

Its subcellular location is the plastid. The protein resides in the chloroplast thylakoid membrane. The enzyme catalyses ATP + H2O + 4 H(+)(in) = ADP + phosphate + 5 H(+)(out). Produces ATP from ADP in the presence of a proton gradient across the membrane. The catalytic sites are hosted primarily by the beta subunits. This Idiospermum australiense (Ribbonwood tree) protein is ATP synthase subunit beta, chloroplastic.